The sequence spans 259 residues: Ribosome maturation factor RimP (259 aa).

The interval 198–259 (SLGLAPEPPP…RGEIDTSEGD (62 aa)) is disordered. The span at 243–253 (LAADKARRGEI) shows a compositional bias: basic and acidic residues.

Belongs to the RimP family.

The protein localises to the cytoplasm. Its function is as follows. Required for maturation of 30S ribosomal subunits. This Rhodopseudomonas palustris (strain TIE-1) protein is Ribosome maturation factor RimP.